A 259-amino-acid polypeptide reads, in one-letter code: Type III pantothenate kinase (259 aa).

An ATP-binding site is contributed by Asp-6–Thr-13. Gly-107–Arg-110 provides a ligand contact to substrate. Catalysis depends on Asp-109, which acts as the Proton acceptor. Position 129 (Asp-129) interacts with K(+). An ATP-binding site is contributed by Thr-132. Thr-184 is a substrate binding site.

This sequence belongs to the type III pantothenate kinase family. Homodimer. It depends on NH4(+) as a cofactor. K(+) serves as cofactor.

The protein resides in the cytoplasm. It carries out the reaction (R)-pantothenate + ATP = (R)-4'-phosphopantothenate + ADP + H(+). It participates in cofactor biosynthesis; coenzyme A biosynthesis; CoA from (R)-pantothenate: step 1/5. Its function is as follows. Catalyzes the phosphorylation of pantothenate (Pan), the first step in CoA biosynthesis. The sequence is that of Type III pantothenate kinase from Listeria monocytogenes serovar 1/2a (strain ATCC BAA-679 / EGD-e).